Reading from the N-terminus, the 487-residue chain is Bifunctional protein HldE (487 aa).

A ribokinase region spans residues 1–329 (MLHAVETAFY…GALLTDATYE (329 aa)). 204–207 (NRGE) serves as a coordination point for ATP. Residue D274 is part of the active site. Residues 356–487 (FTNGCFDLLH…GIVQRISAQK (132 aa)) form a cytidylyltransferase region.

The protein in the N-terminal section; belongs to the carbohydrate kinase PfkB family. This sequence in the C-terminal section; belongs to the cytidylyltransferase family. In terms of assembly, homodimer.

It carries out the reaction D-glycero-beta-D-manno-heptose 7-phosphate + ATP = D-glycero-beta-D-manno-heptose 1,7-bisphosphate + ADP + H(+). The enzyme catalyses D-glycero-beta-D-manno-heptose 1-phosphate + ATP + H(+) = ADP-D-glycero-beta-D-manno-heptose + diphosphate. Its pathway is nucleotide-sugar biosynthesis; ADP-L-glycero-beta-D-manno-heptose biosynthesis; ADP-L-glycero-beta-D-manno-heptose from D-glycero-beta-D-manno-heptose 7-phosphate: step 1/4. It participates in nucleotide-sugar biosynthesis; ADP-L-glycero-beta-D-manno-heptose biosynthesis; ADP-L-glycero-beta-D-manno-heptose from D-glycero-beta-D-manno-heptose 7-phosphate: step 3/4. In terms of biological role, catalyzes the phosphorylation of D-glycero-D-manno-heptose 7-phosphate at the C-1 position to selectively form D-glycero-beta-D-manno-heptose-1,7-bisphosphate. Functionally, catalyzes the ADP transfer from ATP to D-glycero-beta-D-manno-heptose 1-phosphate, yielding ADP-D-glycero-beta-D-manno-heptose. The chain is Bifunctional protein HldE from Magnetococcus marinus (strain ATCC BAA-1437 / JCM 17883 / MC-1).